A 476-amino-acid chain; its full sequence is MEQPHAAAAAAGGGEGEGGASPDTGLEGPMWRMGLGGGGGGGGGGGGGDGDAAGRLPERPGEEDCVYYLRTGACGFGDRCRYNHPRDRGGTEFGGGARNAAALDYPERAGQPICEYYMKTGTCKFGTNCKYHHPKQDGAVLPVMLNNSGFPIRLGEKECSYYMKTGQCKFGTTCKFHHPEFGGVPMTPGIYPPLQSPSIASPHPYASLANWQMGRPPVVPGSYIPGSYTPMMLSSGMIPLQGWSPYPASVNPVVSGGAQQNVQAGPVYGMGHHGSSSTIAYGGPYVPYASSTGQSSNNQQEHGFPERPGQPDCQYYMRTGDCKFGATCKYHHPRELSAPKSGYMVNSLCLPLRPGAQPCAYYAQNGYCRYGVACKYDHPMGTLGYSPSALPLSDMPIAPYPIGFSIATLAPSSPSPDLRPEYISTKDQSVNQVTSPVAASEPVGSILPKGVFPADTMMRAQTNTTSGGSSSPGGGR.

Positions 1-10 (MEQPHAAAAA) are enriched in low complexity. Residues 1–57 (MEQPHAAAAAAGGGEGEGGASPDTGLEGPMWRMGLGGGGGGGGGGGGGDGDAAGRLP) are disordered. Gly residues predominate over residues 34–51 (GLGGGGGGGGGGGGGDGD). C3H1-type zinc fingers lie at residues 59-87 (RPGEEDCVYYLRTGACGFGDRCRYNHPRD), 108-136 (RAGQPICEYYMKTGTCKFGTNCKYHHPKQ), and 153-181 (RLGEKECSYYMKTGQCKFGTTCKFHHPEF). Polar residues predominate over residues 290–301 (SSTGQSSNNQQE). Positions 290–309 (SSTGQSSNNQQEHGFPERPG) are disordered. 2 consecutive C3H1-type zinc fingers follow at residues 307–335 (RPGQPDCQYYMRTGDCKFGATCKYHHPRE) and 353–381 (RPGAQPCAYYAQNGYCRYGVACKYDHPMG). Residues 456–476 (TMMRAQTNTTSGGSSSPGGGR) form a disordered region.

Its subcellular location is the nucleus. This chain is Zinc finger CCCH domain-containing protein 6, found in Oryza sativa subsp. japonica (Rice).